A 549-amino-acid chain; its full sequence is Beta-hexosaminidase Amuc_0868 (549 aa).

An N-terminal signal peptide occupies residues 1–28; it reads MISKCTFSATVFSLFSLCWGAPSSPVLE. A substrate-binding site is contributed by Arg-161. Catalysis depends on charge relay system residues Asp-190 and His-260. Asp-326 lines the substrate pocket. The active-site Charge relay system is Glu-327. Substrate contacts are provided by residues Trp-393, 420 to 422, and 474 to 476; these read YFD and WTE. The segment at 526–549 is disordered; the sequence is GVNYKRPDNGAPAQPKAVITRERR.

Belongs to the glycosyl hydrolase 20 family.

It catalyses the reaction Hydrolysis of terminal non-reducing N-acetyl-D-hexosamine residues in N-acetyl-beta-D-hexosaminides.. Its activity is regulated as follows. Inhibited strongly by Cu(2+), Zn(2+), Cd(2+) and Ni(2+) ions. No effect on activity with Na(+), Li(+), K(+), Ca(2+), Mg(2+) or Mn(2+) ions. In terms of biological role, potentially capable of cleaving the specific glycoside linkages in the process of mucin degradation in human intestinal tract. Hydrolyzes chromogenic substrates pNP-beta-GlcNAc with high activity and pNP-beta-GalNAc to a lesser extent, but not pNP-beta-glucose or pNP-beta-galactose. In Akkermansia muciniphila (strain ATCC BAA-835 / DSM 22959 / JCM 33894 / BCRC 81048 / CCUG 64013 / CIP 107961 / Muc), this protein is Beta-hexosaminidase Amuc_0868.